The chain runs to 125 residues: Prefoldin subunit beta (125 aa).

This sequence belongs to the prefoldin subunit beta family. In terms of assembly, heterohexamer of two alpha and four beta subunits.

It is found in the cytoplasm. Functionally, molecular chaperone capable of stabilizing a range of proteins. Seems to fulfill an ATP-independent, HSP70-like function in archaeal de novo protein folding. The chain is Prefoldin subunit beta from Halobacterium salinarum (strain ATCC 29341 / DSM 671 / R1).